The sequence spans 196 residues: Nucleotide kinase gp1.7 (196 aa).

The disordered stretch occupies residues 97–118; it reads PRKPHLNKPEVTPTDDQPSAET.

As to quaternary structure, dodecamer.

It catalyses the reaction dGMP + ATP = dGDP + ADP. It carries out the reaction dTMP + ATP = dTDP + ADP. In terms of biological role, nucleotide kinase that catalyzes the phosphorylation of dGMP and dTMP to dGDP and dTDP. A double mutation in this protein and the RecBCD inhibitor gp5.9 protein allow phage to overcome the retron Ec48 bacteriophage defense system. This protein alone when overexpressed in E.coli does not cause growth arrest; Y128C may be a silent mutation. This is Nucleotide kinase gp1.7 from Escherichia coli (Bacteriophage T7).